Consider the following 495-residue polypeptide: Potassium voltage-gated channel subfamily A member 1 (495 aa).

A disordered region spans residues 1-30; it reads MTVMSGENVDEASAAPGHPQDGSYPRQADH. A tetramerization domain region spans residues 1–128; that stretch reads MTVMSGENVD…FYELGEEAME (128 aa). Over 1-164 the chain is Cytoplasmic; the sequence is MTVMSGENVD…LLFEYPESSG (164 aa). Position 23 is a phosphoserine (Ser-23). The chain crosses the membrane as a helical span at residues 165–186; the sequence is PARVIAIVSVMVILISIVIFCL. At 187–220 the chain is on the extracellular side; it reads ETLPELKDDKDFTGTVHRIDNTTVIYNSNIFTDP. N-linked (GlcNAc...) asparagine glycosylation is present at Asn-207. A helical membrane pass occupies residues 221-242; the sequence is FFIVETLCIIWFSFELVVRFFA. A lipid anchor (S-palmitoyl cysteine) is attached at Cys-243. The Cytoplasmic segment spans residues 243–253; it reads CPSKTDFFKNI. The chain crosses the membrane as a helical span at residues 254-274; the sequence is MNFIDIVAIIPYFITLGTEIA. Residues 275-287 are Extracellular-facing; that stretch reads EQEGNQKGEQATS. Residues 288 to 308 traverse the membrane as a helical; Voltage-sensor segment; it reads LAILRVIRLVRVFRIFKLSRH. Over 309-323 the chain is Cytoplasmic; that stretch reads SKGLQILGQTLKASM. The tract at residues 310-323 is S4-S5 linker; the sequence is KGLQILGQTLKASM. Ser-322 is modified (phosphoserine; by PKA). Residues 324–345 form a helical membrane-spanning segment; sequence RELGLLIFFLFIGVILFSSAVY. At 346–359 the chain is on the extracellular side; it reads FAEAEEAESHFSSI. The segment at residues 360–371 is an intramembrane region (helical); the sequence is PDAFWWAVVSMT. The Selectivity filter motif lies at 372-377; sequence TVGYGD. The stretch at 372-379 is an intramembrane region; that stretch reads TVGYGDMY. The Extracellular segment spans residues 380 to 386; the sequence is PVTIGGK. Residues 387–415 traverse the membrane as a helical segment; it reads IVGSLCAIAGVLTIALPVPVIVSNFNYFY. Residues 416–495 are Cytoplasmic-facing; it reads HRETEGEEQA…VNKSKLLTDV (80 aa). Phosphoserine occurs at positions 437 and 439. Ser-446 is subject to Phosphoserine; by PKA. The PDZ-binding motif lies at 493–495; the sequence is TDV.

The protein belongs to the potassium channel family. A (Shaker) (TC 1.A.1.2) subfamily. Kv1.1/KCNA1 sub-subfamily. As to quaternary structure, homotetramer and heterotetramer with other channel-forming alpha subunits, such as KCNA2, KCNA4, KCNA5, KCNA6 and KCNA7. Channel activity is regulated by interaction with the beta subunits KCNAB1 and KCNAB2. Identified in a complex with KCNA2 and KCNAB2. Interacts (via C-terminus) with the PDZ domains of DLG1, DLG2 and DLG4. Interacts with LGI1 within a complex containing LGI1, KCNA4 and KCNAB1. Interacts (via N-terminus) with STX1A; this promotes channel inactivation. Interacts (via N-terminus) with the heterodimer formed by GNB1 and GNG2; this promotes channel inactivation. Can interact simultaneously with STX1A and the heterodimer formed by GNB1 and GNG2. Interacts (via cytoplasmic N-terminal domain) with KCNRG; this inhibits channel activity. Interacts with ANK3; this inhibits channel activity. Interacts with ADAM11. In terms of processing, N-glycosylated. Post-translationally, palmitoylated on Cys-243; which may be required for membrane targeting. Phosphorylated on tyrosine residues. Phosphorylation increases in response to NRG1; this inhibits channel activity. Phosphorylation at Ser-446 regulates channel activity by down-regulating expression at the cell membrane. As to expression, detected adjacent to nodes of Ranvier in juxtaparanodal zones in spinal cord nerve fibers, but also in paranodal regions in some myelinated spinal cord axons (at protein level). Detected in the islet of Langerhans.

Its subcellular location is the cell membrane. It is found in the membrane. The protein localises to the cell projection. The protein resides in the axon. It localises to the cytoplasmic vesicle. Its subcellular location is the perikaryon. It is found in the endoplasmic reticulum. The protein localises to the dendrite. The protein resides in the cell junction. It localises to the synapse. Its subcellular location is the presynaptic cell membrane. It is found in the presynapse. The enzyme catalyses K(+)(in) = K(+)(out). Its activity is regulated as follows. Inhibited by 1.1 mM 4-aminopyridine (4-AP) and by 20 mM tetraethylammonium (TEA), but not by charybdotoxin (CTX). Inhibited by dendrotoxin (DTX). Voltage-gated potassium channel that mediates transmembrane potassium transport in excitable membranes, primarily in the brain and the central nervous system, but also in the kidney. Contributes to the regulation of the membrane potential and nerve signaling, and prevents neuronal hyperexcitability. Forms tetrameric potassium-selective channels through which potassium ions pass in accordance with their electrochemical gradient. The channel alternates between opened and closed conformations in response to the voltage difference across the membrane. Can form functional homotetrameric channels and heterotetrameric channels that contain variable proportions of KCNA1, KCNA2, KCNA4, KCNA5, KCNA6, KCNA7, and possibly other family members as well; channel properties depend on the type of alpha subunits that are part of the channel. Channel properties are modulated by cytoplasmic beta subunits that regulate the subcellular location of the alpha subunits and promote rapid inactivation of delayed rectifier potassium channels. In vivo, membranes probably contain a mixture of heteromeric potassium channel complexes, making it difficult to assign currents observed in intact tissues to any particular potassium channel family member. Homotetrameric KCNA1 forms a delayed-rectifier potassium channel that opens in response to membrane depolarization, followed by slow spontaneous channel closure. In contrast, a heterotetrameric channel formed by KCNA1 and KCNA4 shows rapid inactivation. Regulates neuronal excitability in hippocampus, especially in mossy fibers and medial perforant path axons, preventing neuronal hyperexcitability. Response to toxins that are selective for KCNA1, respectively for KCNA2, suggests that heteromeric potassium channels composed of both KCNA1 and KCNA2 play a role in pacemaking and regulate the output of deep cerebellar nuclear neurons. May function as down-stream effector for G protein-coupled receptors and inhibit GABAergic inputs to basolateral amygdala neurons. May contribute to the regulation of neurotransmitter release, such as gamma-aminobutyric acid (GABA) release. Plays a role in regulating the generation of action potentials and preventing hyperexcitability in myelinated axons of the vagus nerve, and thereby contributes to the regulation of heart contraction. Required for normal neuromuscular responses. Regulates the frequency of neuronal action potential firing in response to mechanical stimuli, and plays a role in the perception of pain caused by mechanical stimuli, but does not play a role in the perception of pain due to heat stimuli. Required for normal responses to auditory stimuli and precise location of sound sources, but not for sound perception. The use of toxins that block specific channels suggest that it contributes to the regulation of the axonal release of the neurotransmitter dopamine. Required for normal postnatal brain development and normal proliferation of neuronal precursor cells in the brain. Plays a role in the reabsorption of Mg(2+) in the distal convoluted tubules in the kidney and in magnesium ion homeostasis, probably via its effect on the membrane potential. In Homo sapiens (Human), this protein is Potassium voltage-gated channel subfamily A member 1.